The following is a 147-amino-acid chain: Zinc finger HIT domain-containing protein 3 (147 aa).

The Zn(2+) site is built by Cys-3, Cys-6, Cys-14, Cys-17, Cys-22, Cys-26, His-30, and Cys-34. Residues Cys-3 to Cys-34 form an HIT-type zinc finger. A disordered region spans residues Ile-45 to Ala-67. Ser-72 carries the post-translational modification Phosphoserine.

Thyroid receptor interacting proteins (TRIPs) specifically interact with the ligand binding domain of the thyroid receptor (TR). Requires the presence of thyroid hormone for its interaction. Interacts with NUFIP1. Interacts (via HIT-type zinc finger) with the RUVBL1/RUVBL2 complex in the presence of ADP.

Its subcellular location is the cytoplasm. It localises to the nucleus. This chain is Zinc finger HIT domain-containing protein 3 (ZNHIT3), found in Macaca mulatta (Rhesus macaque).